We begin with the raw amino-acid sequence, 259 residues long: Cell division protein FtsQ (259 aa).

Residues 1-15 (MTRDQTATFGRHALR) are Cytoplasmic-facing. Residues 16 to 36 (VAGSGLLVAGVVALGLLGWQW) traverse the membrane as a helical segment. Residues 37-259 (RANVTVDRVA…VVTRTRPLDG (223 aa)) are Periplasmic-facing. One can recognise a POTRA domain in the interval 40 to 109 (VTVDRVAVTG…GALTISVTER (70 aa)).

Belongs to the FtsQ/DivIB family. FtsQ subfamily.

It is found in the cell inner membrane. Functionally, essential cell division protein. This chain is Cell division protein FtsQ, found in Salinibacter ruber (strain DSM 13855 / M31).